A 441-amino-acid chain; its full sequence is Carbohydrate sulfotransferase 3 (441 aa).

At 1-4 (MKMR) the chain is on the cytoplasmic side. A helical; Signal-anchor for type II membrane protein transmembrane segment spans residues 5–21 (SKYAIILFFVVALVIIE). Over 22 to 441 (KERNIISRVS…LLENRNFWIT (420 aa)) the chain is Lumenal. N-linked (GlcNAc...) asparagine glycosylation is found at asparagine 47 and asparagine 58. A 3'-phosphoadenylyl sulfate-binding site is contributed by 106–112 (TRTGSSF). Asparagine 221 carries N-linked (GlcNAc...) asparagine glycosylation. 266-274 (RDPRAVLAS) contacts 3'-phosphoadenylyl sulfate. Asparagine 427 carries an N-linked (GlcNAc...) asparagine glycan.

The protein belongs to the sulfotransferase 1 family. Gal/GlcNAc/GalNAc subfamily. N-glycosylated. In terms of tissue distribution, in electric organ, it is moderately expressed in spinal cord and electric lobe and undetectable in non-neural tissues. Expressed in a punctate distribution in the innervated portion of electrocytes. In the CNS, it is localized within the somas of motor neurons and neurons of the electromotor nucleus.

Its subcellular location is the golgi apparatus membrane. It carries out the reaction chondroitin beta-D-glucuronate + n 3'-phosphoadenylyl sulfate = chondroitin 6'-sulfate + n adenosine 3',5'-bisphosphate + n H(+). The catalysed reaction is 3'-phosphoadenylyl sulfate + keratan = adenosine 3',5'-bisphosphate + keratan 6'-sulfate.. Its function is as follows. Sulfotransferase that utilizes 3'-phospho-5'-adenylyl sulfate (PAPS) as sulfonate donor to catalyze the transfer of sulfate to position 6 of the N-acetylgalactosamine (GalNAc) residue of chondroitin. Chondroitin sulfate constitutes the predominant proteoglycan present in cartilage and is distributed on the surfaces of many cells and extracellular matrices. Catalyzes with a lower efficiency the sulfation of Gal residues of keratan sulfate, another glycosaminoglycan. Can also catalyze the sulfation of the Gal residues in sialyl N-acetyllactosamine (sialyl LacNAc) oligosaccharides. The protein is Carbohydrate sulfotransferase 3 (CHST3) of Tetronarce californica (Pacific electric ray).